Reading from the N-terminus, the 395-residue chain is Phosphopentomutase (395 aa).

Mn(2+) is bound by residues D14, D286, H291, D327, H328, and H339.

The protein belongs to the phosphopentomutase family. Requires Mn(2+) as cofactor.

It is found in the cytoplasm. The enzyme catalyses 2-deoxy-alpha-D-ribose 1-phosphate = 2-deoxy-D-ribose 5-phosphate. The catalysed reaction is alpha-D-ribose 1-phosphate = D-ribose 5-phosphate. Its pathway is carbohydrate degradation; 2-deoxy-D-ribose 1-phosphate degradation; D-glyceraldehyde 3-phosphate and acetaldehyde from 2-deoxy-alpha-D-ribose 1-phosphate: step 1/2. Isomerase that catalyzes the conversion of deoxy-ribose 1-phosphate (dRib-1-P) and ribose 1-phosphate (Rib-1-P) to deoxy-ribose 5-phosphate (dRib-5-P) and ribose 5-phosphate (Rib-5-P), respectively. This chain is Phosphopentomutase, found in Staphylococcus saprophyticus subsp. saprophyticus (strain ATCC 15305 / DSM 20229 / NCIMB 8711 / NCTC 7292 / S-41).